Reading from the N-terminus, the 252-residue chain is Transcriptional regulatory protein HptR (252 aa).

The 116-residue stretch at 3 to 118 folds into the Response regulatory domain; it reads KVVICDDERI…QLEVILGRLV (116 aa). Asp-55 carries the 4-aspartylphosphate modification. An HTH araC/xylS-type domain is found at 153–250; it reads NQIVDQIKQS…QMSPSDYCKQ (98 aa). DNA-binding regions (H-T-H motif) lie at residues 170-191 and 217-240; these read SDLI…KDHV and HYEI…KKYL.

In terms of processing, phosphorylated by HptS.

Its subcellular location is the cytoplasm. Its function is as follows. Member of the two-component regulatory system HptS/HptR that regulates genes involved in hexose phosphate transport system in response to changes in extracellular phosphate sources. Activates uhpT expression to facilitate glucose-6-phosphate/G6P utilization by directly binding to its promoter. Antagonizes CcpA-dependent transcription of a subset of CcpA-regulated genes involved in antibiotic susceptibility. This chain is Transcriptional regulatory protein HptR (hptR), found in Staphylococcus aureus (strain NCTC 8325 / PS 47).